We begin with the raw amino-acid sequence, 106 residues long: Iron-sulfur cluster assembly protein CyaY (106 aa).

It belongs to the frataxin family.

Functionally, involved in iron-sulfur (Fe-S) cluster assembly. May act as a regulator of Fe-S biogenesis. The chain is Iron-sulfur cluster assembly protein CyaY from Pectobacterium atrosepticum (strain SCRI 1043 / ATCC BAA-672) (Erwinia carotovora subsp. atroseptica).